We begin with the raw amino-acid sequence, 1326 residues long: Coiled-coil domain-containing protein 171 (1326 aa).

Coiled-coil stretches lie at residues 53–294 (TTKH…RAAH), 323–391 (AEAV…RLQY), 450–561 (SFSV…AFHK), 597–630 (SELCAVLQENVDALIADLNRANEKIRHLEYICKN), 660–707 (WHRQ…EQLV), 765–792 (FKLEIRTLAQALSTVEEKKQEEAKMKKK), 979–1143 (FTQR…KECV), and 1217–1241 (IMTLEKEMTSHRSHIAALKSELHTA). The tract at residues 1306–1326 (SSHSSPVTMSANANRPTQIGL) is disordered.

This Homo sapiens (Human) protein is Coiled-coil domain-containing protein 171 (CCDC171).